Reading from the N-terminus, the 251-residue chain is uncharacterized protein (251 aa).

The region spanning 4–152 (IEITKDNIED…YFQLMALTWN (149 aa)) is the N-acetyltransferase domain.

This sequence belongs to the acetyltransferase family.

This is an uncharacterized protein from Bacillus subtilis (strain 168).